The following is a 684-amino-acid chain: Methionine--tRNA ligase (684 aa).

The 'HIGH' region signature appears at 15–25; it reads PYANGAIHLGH. Zn(2+)-binding residues include Cys146, Cys149, Cys159, and Cys162. The 'KMSKS' region signature appears at 331 to 335; sequence KMSKS. Residue Lys334 participates in ATP binding. The tRNA-binding domain occupies 582–684; it reads DFAKLDLRVA…SGVTAGMQVR (103 aa).

This sequence belongs to the class-I aminoacyl-tRNA synthetase family. MetG type 1 subfamily. In terms of assembly, homodimer. It depends on Zn(2+) as a cofactor.

The protein localises to the cytoplasm. It catalyses the reaction tRNA(Met) + L-methionine + ATP = L-methionyl-tRNA(Met) + AMP + diphosphate. Is required not only for elongation of protein synthesis but also for the initiation of all mRNA translation through initiator tRNA(fMet) aminoacylation. In Glaesserella parasuis serovar 5 (strain SH0165) (Haemophilus parasuis), this protein is Methionine--tRNA ligase.